The following is a 388-amino-acid chain: Glucose-6-phosphate/phosphate translocator 1, chloroplastic (388 aa).

The transit peptide at 1–65 (MVLSVKQTLS…LRAKSPVVRC (65 aa)) directs the protein to the chloroplast. 8 consecutive transmembrane segments (helical) span residues 95 to 115 (LKIGIYFATWWALNVVFNIYN), 129 to 149 (STLSLAAGSLMMLISWAVGIV), 158 to 178 (FWKTLFPVAVAHTIGHVAATV), 211 to 231 (FPTSVYLSLIPIIGGCALSAL), 233 to 253 (ELNFNMIGFMGAMISNLAFVF), 273 to 293 (YACLSMLSLLILTPFAIAVEG), 305 to 325 (LATVGPQFVWWVVAQSVFYHL), and 363 to 383 (TPVQPVNALGAAIAILGTFLY). Positions 112–229 (NIYNKKVLNA…IPIIGGCALS (118 aa)) constitute an EamA domain.

This sequence belongs to the TPT transporter family. GPT (TC 2.A.7.9) subfamily. As to expression, expressed in seeds, flowers, rosette leaves, and roots, with highest levels found in stamens. Found in the root cap, in guard cells and in mesophyll cells.

The protein localises to the plastid. It is found in the chloroplast membrane. The protein resides in the endoplasmic reticulum membrane. It localises to the peroxisome membrane. Functionally, glucose 6-phosphate (Glc6P) transporter. Also transports inorganic phosphate, 3-phosphoglycerate, triose phosphates and, to a leser extent, phosphoenolpyruvate. Responsible for the transport of Glc6P into plastids of heterotrophic tissues where it can be used as a carbon source for starch biosynthesis, as substrate for fatty acid biosynthesis or as substrate for NADPH generation via the oxidative pentose phosphate pathway (OPPP). Required for pollen maturation and embryo sac development. Preferentially exchanges Glc6P for ribulose-5-phosphate (Ru5P) in reconstituted yeast proteoliposomes. May supply the substrate (Glc6P) for OPPP reactions inside peroxisomes and exchange it with the product Ru5P which leaves the organelle. This chain is Glucose-6-phosphate/phosphate translocator 1, chloroplastic, found in Arabidopsis thaliana (Mouse-ear cress).